The primary structure comprises 202 residues: NADH-quinone oxidoreductase subunit C (202 aa).

Belongs to the complex I 30 kDa subunit family. NDH-1 is composed of 14 different subunits. Subunits NuoB, C, D, E, F, and G constitute the peripheral sector of the complex.

It localises to the cell inner membrane. It catalyses the reaction a quinone + NADH + 5 H(+)(in) = a quinol + NAD(+) + 4 H(+)(out). Its function is as follows. NDH-1 shuttles electrons from NADH, via FMN and iron-sulfur (Fe-S) centers, to quinones in the respiratory chain. The immediate electron acceptor for the enzyme in this species is believed to be ubiquinone. Couples the redox reaction to proton translocation (for every two electrons transferred, four hydrogen ions are translocated across the cytoplasmic membrane), and thus conserves the redox energy in a proton gradient. This chain is NADH-quinone oxidoreductase subunit C, found in Brucella canis (strain ATCC 23365 / NCTC 10854 / RM-666).